The sequence spans 90 residues: Protein RALF-like 3 (90 aa).

The signal sequence occupies residues 1–29; the sequence is MSNLRGTNRFILVAVLVSFVFLSIMNAEA. 2 cysteine pairs are disulfide-bonded: Cys-59–Cys-67 and Cys-80–Cys-86.

The protein belongs to the plant rapid alkalinization factor (RALF) family.

The protein resides in the secreted. Functionally, cell signaling peptide that may regulate plant stress, growth, and development. Mediates a rapid alkalinization of extracellular space by mediating a transient increase in the cytoplasmic Ca(2+) concentration leading to a calcium-dependent signaling events through a cell surface receptor and a concomitant activation of some intracellular mitogen-activated protein kinases. The protein is Protein RALF-like 3 (RALFL3) of Arabidopsis thaliana (Mouse-ear cress).